Reading from the N-terminus, the 264-residue chain is Thymidylate synthase (264 aa).

Arginine 21 is a binding site for dUMP. Position 51 (histidine 51) interacts with (6R)-5,10-methylene-5,6,7,8-tetrahydrofolate. DUMP is bound at residue 126–127; sequence RR. The Nucleophile role is filled by cysteine 146. DUMP-binding positions include 166–169, asparagine 177, and 207–209; these read RSCD and HLY. Aspartate 169 is a binding site for (6R)-5,10-methylene-5,6,7,8-tetrahydrofolate. Alanine 263 contributes to the (6R)-5,10-methylene-5,6,7,8-tetrahydrofolate binding site.

The protein belongs to the thymidylate synthase family. Bacterial-type ThyA subfamily. In terms of assembly, homodimer.

Its subcellular location is the cytoplasm. It catalyses the reaction dUMP + (6R)-5,10-methylene-5,6,7,8-tetrahydrofolate = 7,8-dihydrofolate + dTMP. It functions in the pathway pyrimidine metabolism; dTTP biosynthesis. Functionally, catalyzes the reductive methylation of 2'-deoxyuridine-5'-monophosphate (dUMP) to 2'-deoxythymidine-5'-monophosphate (dTMP) while utilizing 5,10-methylenetetrahydrofolate (mTHF) as the methyl donor and reductant in the reaction, yielding dihydrofolate (DHF) as a by-product. This enzymatic reaction provides an intracellular de novo source of dTMP, an essential precursor for DNA biosynthesis. The polypeptide is Thymidylate synthase (Salmonella paratyphi C (strain RKS4594)).